Here is a 589-residue protein sequence, read N- to C-terminus: Probable translation initiation factor IF-2 (589 aa).

Residues 14-229 (LRQPIVCVLG…LAGLAQRFLE (216 aa)) form the tr-type G domain. Residues 23-30 (GHVDHGKT) form a G1 region. 23-30 (GHVDHGKT) is a GTP binding site. The G2 stretch occupies residues 48-52 (GITQR). The interval 84–87 (DTPG) is G3. GTP contacts are provided by residues 84–88 (DTPGH) and 138–141 (NKID). The interval 138 to 141 (NKID) is G4. The tract at residues 206–208 (SAK) is G5.

It belongs to the TRAFAC class translation factor GTPase superfamily. Classic translation factor GTPase family. IF-2 subfamily.

In terms of biological role, function in general translation initiation by promoting the binding of the formylmethionine-tRNA to ribosomes. Seems to function along with eIF-2. This is Probable translation initiation factor IF-2 (infB) from Thermoplasma acidophilum (strain ATCC 25905 / DSM 1728 / JCM 9062 / NBRC 15155 / AMRC-C165).